We begin with the raw amino-acid sequence, 503 residues long: Lactation elevated protein 1 homolog B (503 aa).

Residues L108 to Y155 form a disordered region. The segment covering R130–K148 has biased composition (basic and acidic residues). G159–T166 is an ATP binding site.

The protein belongs to the AFG1 ATPase family.

This is Lactation elevated protein 1 homolog B (lace1b) from Danio rerio (Zebrafish).